Reading from the N-terminus, the 449-residue chain is UNC93-like protein MFSD11 (449 aa).

A helical transmembrane segment spans residues Leu-8–Cys-28. N-linked (GlcNAc...) asparagine glycosylation occurs at Asn-40. Transmembrane regions (helical) follow at residues Ala-53–Val-73, Gly-74–Asn-94, Pro-96–Trp-116, Ile-138–Trp-158, and Arg-170–Ile-190. Ser-204 is subject to Phosphoserine. The next 6 helical transmembrane spans lie at Met-239–Val-259, Leu-277–Gly-297, Pro-309–Met-329, Phe-359–Leu-379, Ala-385–Tyr-405, and Leu-410–Phe-430.

This sequence belongs to the unc-93 family.

It localises to the membrane. This Pongo abelii (Sumatran orangutan) protein is UNC93-like protein MFSD11 (MFSD11).